The sequence spans 297 residues: Tumor necrosis factor receptor superfamily member 27 (297 aa).

At 1–138 (MDCQENEYRD…AHTVPPREAT (138 aa)) the chain is on the extracellular side. TNFR-Cys repeat units follow at residues 2-41 (DCQE…DAHC), 43-83 (VCPP…NAIC), and 85-118 (DCLP…EVQC). 8 cysteine pairs are disulfide-bonded: Cys3–Cys15, Cys18–Cys31, Cys21–Cys41, Cys44–Cys58, Cys61–Cys75, Cys64–Cys83, Cys86–Cys104, and Cys107–Cys118. Asn74 and Asn77 each carry an N-linked (GlcNAc...) asparagine glycan. The chain crosses the membrane as a helical; Signal-anchor for type III membrane protein span at residues 139–159 (LVALVGSLLVVFALAFLGLFF). Over 160–297 (LYCKQIFNRH…LYVPFEVPSL (138 aa)) the chain is Cytoplasmic.

As to quaternary structure, associates with TRAF1, TRAF3 and TRAF6.

The protein resides in the membrane. Receptor for EDA isoform A2, but not for EDA isoform A1. Mediates the activation of the NF-kappa-B and JNK pathways. Activation seems to be mediated by binding to TRAF3 and TRAF6. The sequence is that of Tumor necrosis factor receptor superfamily member 27 (Eda2r) from Mus musculus (Mouse).